We begin with the raw amino-acid sequence, 155 residues long: Ribonuclease H (155 aa).

Residues 5–146 enclose the RNase H type-1 domain; it reads DQKPVIIHTD…ADQLARDGLT (142 aa). Mg(2+)-binding residues include Asp14, Glu52, Asp74, and Asp138. Residues 133–155 are disordered; sequence ENERADQLARDGLTENRMKSRVK.

It belongs to the RNase H family. Monomer. The cofactor is Mg(2+).

It localises to the cytoplasm. The enzyme catalyses Endonucleolytic cleavage to 5'-phosphomonoester.. Functionally, endonuclease that specifically degrades the RNA of RNA-DNA hybrids. The sequence is that of Ribonuclease H from Rhodopseudomonas palustris (strain ATCC BAA-98 / CGA009).